Consider the following 638-residue polypeptide: 1-deoxy-D-xylulose-5-phosphate synthase (638 aa).

Thiamine diphosphate-binding positions include His-79 and 120–122 (AHS). Asp-151 provides a ligand contact to Mg(2+). Thiamine diphosphate is bound by residues 152–153 (GA), Asn-180, Tyr-289, and Glu-371. Position 180 (Asn-180) interacts with Mg(2+).

It belongs to the transketolase family. DXPS subfamily. Homodimer. Mg(2+) serves as cofactor. It depends on thiamine diphosphate as a cofactor.

It carries out the reaction D-glyceraldehyde 3-phosphate + pyruvate + H(+) = 1-deoxy-D-xylulose 5-phosphate + CO2. It functions in the pathway metabolic intermediate biosynthesis; 1-deoxy-D-xylulose 5-phosphate biosynthesis; 1-deoxy-D-xylulose 5-phosphate from D-glyceraldehyde 3-phosphate and pyruvate: step 1/1. In terms of biological role, catalyzes the acyloin condensation reaction between C atoms 2 and 3 of pyruvate and glyceraldehyde 3-phosphate to yield 1-deoxy-D-xylulose-5-phosphate (DXP). The sequence is that of 1-deoxy-D-xylulose-5-phosphate synthase from Rhizobium leguminosarum bv. trifolii (strain WSM2304).